A 317-amino-acid chain; its full sequence is Carbonic anhydrase 5B, mitochondrial (317 aa).

Residues 1–33 (MVVMNSLRVILQASPGKLLWRKFQIPRFMPARP) constitute a mitochondrion transit peptide. One can recognise an Alpha-carbonic anhydrase domain in the interval 37–296 (YTCTYKTRNR…LMNRTVRSSF (260 aa)). His-130, His-132, and His-155 together coordinate Zn(2+). Position 235–236 (235–236 (TT)) interacts with substrate.

Belongs to the alpha-carbonic anhydrase family. Zn(2+) is required as a cofactor. Strongest expression in heart, pancreas, kidney, placenta, lung, and skeletal muscle. Not expressed in liver.

It is found in the mitochondrion. The enzyme catalyses hydrogencarbonate + H(+) = CO2 + H2O. With respect to regulation, inhibited by coumarins, sulfonamide derivatives such as acetazolamide (AZA), saccharin and Foscarnet (phosphonoformate trisodium salt). Functionally, mitochondrial carbonic anhydrase that catalyzes the reversible conversion of carbon dioxide to bicarbonate/HCO3. This Homo sapiens (Human) protein is Carbonic anhydrase 5B, mitochondrial (CA5B).